A 34-amino-acid chain; its full sequence is Trypsin inhibitor 1 (34 aa).

The cyclopeptide (Ser-Gly) cross-link spans 1–34; it reads SGSDGGVCPKILQRCRRDSDCPGACICRGNGYCG. 3 disulfides stabilise this stretch: Cys-8-Cys-25, Cys-15-Cys-27, and Cys-21-Cys-33.

Post-translationally, this is a cyclic peptide.

It is found in the secreted. In terms of biological role, inhibits trypsin; probably participates in a plant defense mechanism. In Momordica cochinchinensis (Spiny bitter cucumber), this protein is Trypsin inhibitor 1.